Reading from the N-terminus, the 87-residue chain is UPF0297 protein Sca_1229 (87 aa).

This sequence belongs to the UPF0297 family.

In Staphylococcus carnosus (strain TM300), this protein is UPF0297 protein Sca_1229.